A 385-amino-acid chain; its full sequence is Chorismate synthase (385 aa).

Positions 40 and 46 each coordinate NADP(+). Residues 128 to 130 (RAS), 248 to 249 (QA), glycine 293, 308 to 312 (KAIPS), and arginine 334 each bind FMN.

This sequence belongs to the chorismate synthase family. In terms of assembly, homotetramer. Requires FMNH2 as cofactor.

The enzyme catalyses 5-O-(1-carboxyvinyl)-3-phosphoshikimate = chorismate + phosphate. It functions in the pathway metabolic intermediate biosynthesis; chorismate biosynthesis; chorismate from D-erythrose 4-phosphate and phosphoenolpyruvate: step 7/7. Its function is as follows. Catalyzes the anti-1,4-elimination of the C-3 phosphate and the C-6 proR hydrogen from 5-enolpyruvylshikimate-3-phosphate (EPSP) to yield chorismate, which is the branch point compound that serves as the starting substrate for the three terminal pathways of aromatic amino acid biosynthesis. This reaction introduces a second double bond into the aromatic ring system. This Endomicrobium trichonymphae protein is Chorismate synthase.